A 590-amino-acid chain; its full sequence is UvrABC system protein C (590 aa).

The 78-residue stretch at 14–91 (DQPGCYLMKD…IKKHDPKYNV (78 aa)) folds into the GIY-YIG domain. Residues 196-231 (NEVKKELEEKMHEAAENLEFERAKELRDQIAHIEST) enclose the UVR domain.

The protein belongs to the UvrC family. As to quaternary structure, interacts with UvrB in an incision complex.

Its subcellular location is the cytoplasm. Its function is as follows. The UvrABC repair system catalyzes the recognition and processing of DNA lesions. UvrC both incises the 5' and 3' sides of the lesion. The N-terminal half is responsible for the 3' incision and the C-terminal half is responsible for the 5' incision. This is UvrABC system protein C from Bacillus subtilis (strain 168).